Here is a 503-residue protein sequence, read N- to C-terminus: Probable cytosol aminopeptidase (503 aa).

Mn(2+)-binding residues include K274 and D279. The active site involves K286. Residues D297, D356, and E358 each coordinate Mn(2+). The active site involves R360.

This sequence belongs to the peptidase M17 family. It depends on Mn(2+) as a cofactor.

It is found in the cytoplasm. The enzyme catalyses Release of an N-terminal amino acid, Xaa-|-Yaa-, in which Xaa is preferably Leu, but may be other amino acids including Pro although not Arg or Lys, and Yaa may be Pro. Amino acid amides and methyl esters are also readily hydrolyzed, but rates on arylamides are exceedingly low.. The catalysed reaction is Release of an N-terminal amino acid, preferentially leucine, but not glutamic or aspartic acids.. In terms of biological role, presumably involved in the processing and regular turnover of intracellular proteins. Catalyzes the removal of unsubstituted N-terminal amino acids from various peptides. This is Probable cytosol aminopeptidase from Burkholderia cenocepacia (strain ATCC BAA-245 / DSM 16553 / LMG 16656 / NCTC 13227 / J2315 / CF5610) (Burkholderia cepacia (strain J2315)).